The chain runs to 229 residues: MFDIGFSELLLFGVIALIVLGPEKLPQAARTAGQWYAKIRRTVSTLQSEIEAELDLAETRQLMQKELAKIRQTEAEMRREMAEMRGSIKEFEHSQSQNLKTSDKAASPANQANNDSAIQNNNEPATFSYAYGQSNNLTDSQQLSNQDITSINSDAVTDSSTIKQPAQPLITKPWENMWFRLGAYDKARRLPAVPYLPNYKADILLNSSFDSSFDSPLNTQASVNQQESE.

Residues 1-21 (MFDIGFSELLLFGVIALIVLG) form a helical membrane-spanning segment. Positions 90–131 (EFEHSQSQNLKTSDKAASPANQANNDSAIQNNNEPATFSYAY) are disordered. A compositionally biased stretch (polar residues) spans 108–131 (PANQANNDSAIQNNNEPATFSYAY).

The protein belongs to the TatB family. The Tat system comprises two distinct complexes: a TatABC complex, containing multiple copies of TatA, TatB and TatC subunits, and a separate TatA complex, containing only TatA subunits. Substrates initially bind to the TatABC complex, which probably triggers association of the separate TatA complex to form the active translocon.

It is found in the cell inner membrane. Its function is as follows. Part of the twin-arginine translocation (Tat) system that transports large folded proteins containing a characteristic twin-arginine motif in their signal peptide across membranes. Together with TatC, TatB is part of a receptor directly interacting with Tat signal peptides. TatB may form an oligomeric binding site that transiently accommodates folded Tat precursor proteins before their translocation. The protein is Sec-independent protein translocase protein TatB of Psychrobacter arcticus (strain DSM 17307 / VKM B-2377 / 273-4).